The following is a 336-amino-acid chain: Ketol-acid reductoisomerase (NADP(+)) (336 aa).

Positions 2 to 181 constitute a KARI N-terminal Rossmann domain; it reads AKVYYEKDVM…GATRAGVLET (180 aa). NADP(+) is bound by residues 25-28, Arg48, Ser52, and 82-85; these read YGSQ and DELQ. His107 is an active-site residue. Gly133 lines the NADP(+) pocket. The region spanning 182–327 is the KARI C-terminal knotted domain; it reads TFKEETETDL…RQLREMMPFV (146 aa). The Mg(2+) site is built by Asp190, Glu194, Glu226, and Glu230. A substrate-binding site is contributed by Ser251.

Belongs to the ketol-acid reductoisomerase family. Requires Mg(2+) as cofactor.

The enzyme catalyses (2R)-2,3-dihydroxy-3-methylbutanoate + NADP(+) = (2S)-2-acetolactate + NADPH + H(+). It carries out the reaction (2R,3R)-2,3-dihydroxy-3-methylpentanoate + NADP(+) = (S)-2-ethyl-2-hydroxy-3-oxobutanoate + NADPH + H(+). Its pathway is amino-acid biosynthesis; L-isoleucine biosynthesis; L-isoleucine from 2-oxobutanoate: step 2/4. It participates in amino-acid biosynthesis; L-valine biosynthesis; L-valine from pyruvate: step 2/4. Involved in the biosynthesis of branched-chain amino acids (BCAA). Catalyzes an alkyl-migration followed by a ketol-acid reduction of (S)-2-acetolactate (S2AL) to yield (R)-2,3-dihydroxy-isovalerate. In the isomerase reaction, S2AL is rearranged via a Mg-dependent methyl migration to produce 3-hydroxy-3-methyl-2-ketobutyrate (HMKB). In the reductase reaction, this 2-ketoacid undergoes a metal-dependent reduction by NADPH to yield (R)-2,3-dihydroxy-isovalerate. The chain is Ketol-acid reductoisomerase (NADP(+)) from Bacillus cytotoxicus (strain DSM 22905 / CIP 110041 / 391-98 / NVH 391-98).